An 872-amino-acid polypeptide reads, in one-letter code: C-mannosyltransferase dpy-19 homolog (872 aa).

A run of 9 helical transmembrane segments spans residues 4-24 (PNLY…FLYV), 126-146 (FVWL…TLLS), 149-169 (IFGG…VAKI), 179-199 (FAFP…GRII), 211-231 (IFAM…STFI), 257-277 (VLDY…MSHG), 279-299 (SQLL…ITMV), 326-346 (FLML…ELFN), and 399-419 (VKTM…AMFF). The stretch at 508–535 (KRLRAQINRNSVKQRKERAQETKEAATD) forms a coiled coil. Residues 514-620 (INRNSVKQRK…RSSSRRSSVV (107 aa)) are disordered. Residues 524 to 533 (ERAQETKEAA) show a composition bias toward basic and acidic residues. A compositionally biased stretch (acidic residues) spans 541–551 (TEEEDKDPEAE). The next 2 membrane-spanning stretches (helical) occupy residues 627-647 (ILNM…LIGL) and 678-698 (NIFW…PGMV).

The protein belongs to the dpy-19 family.

The protein localises to the membrane. Functionally, probable C-mannosyltransferase that mediates C-mannosylation of tryptophan residues on target proteins. This is C-mannosyltransferase dpy-19 homolog from Drosophila melanogaster (Fruit fly).